A 148-amino-acid chain; its full sequence is MKAVIILGLVLLSVTVQGKIFERCELARTLKRLGLDGYRGISLANWVCLAKWESNYNTQATNYNPGDQSTDYGIFQINSHYWCNNGKTPGAVNACHISCNALLQDNIADAVTCAKRVVSDPQGIRAWVAWRNHCQNRDVSQYVQGCGV.

Positions 1-18 (MKAVIILGLVLLSVTVQG) are cleaved as a signal peptide. Residues 19 to 148 (KIFERCELAR…VSQYVQGCGV (130 aa)) form the C-type lysozyme domain. 4 disulfides stabilise this stretch: Cys-24-Cys-146, Cys-48-Cys-134, Cys-83-Cys-99, and Cys-95-Cys-113. Residues Glu-53 and Asp-71 contribute to the active site.

Belongs to the glycosyl hydrolase 22 family. As to quaternary structure, monomer.

It is found in the secreted. The enzyme catalyses Hydrolysis of (1-&gt;4)-beta-linkages between N-acetylmuramic acid and N-acetyl-D-glucosamine residues in a peptidoglycan and between N-acetyl-D-glucosamine residues in chitodextrins.. Its function is as follows. Lysozymes have primarily a bacteriolytic function; those in tissues and body fluids are associated with the monocyte-macrophage system and enhance the activity of immunoagents. The polypeptide is Lysozyme C (LYZ) (Macaca mulatta (Rhesus macaque)).